We begin with the raw amino-acid sequence, 238 residues long: ATP synthase subunit a (238 aa).

A run of 5 helical transmembrane segments spans residues 18 to 38 (GTTMITTTIAMAIVVIITVIG), 76 to 96 (FIVLAYALLFYVFVANMMGIP), 117 to 137 (VLTLTMAVFIVVLTHIYGIMV), 173 to 193 (LFGNIYAKEILMLLLVSLGTT), and 208 to 230 (WQAFSIFIGSLQAYIFAMLAMVY).

It belongs to the ATPase A chain family. In terms of assembly, F-type ATPases have 2 components, CF(1) - the catalytic core - and CF(0) - the membrane proton channel. CF(1) has five subunits: alpha(3), beta(3), gamma(1), delta(1), epsilon(1). CF(0) has three main subunits: a(1), b(2) and c(9-12). The alpha and beta chains form an alternating ring which encloses part of the gamma chain. CF(1) is attached to CF(0) by a central stalk formed by the gamma and epsilon chains, while a peripheral stalk is formed by the delta and b chains.

The protein localises to the cell membrane. Its function is as follows. Key component of the proton channel; it plays a direct role in the translocation of protons across the membrane. The sequence is that of ATP synthase subunit a from Shouchella clausii (strain KSM-K16) (Alkalihalobacillus clausii).